The primary structure comprises 74 residues: Large ribosomal subunit protein bL31 (74 aa).

Belongs to the bacterial ribosomal protein bL31 family. Type A subfamily. Part of the 50S ribosomal subunit.

In terms of biological role, binds the 23S rRNA. This is Large ribosomal subunit protein bL31 from Phenylobacterium zucineum (strain HLK1).